A 344-amino-acid polypeptide reads, in one-letter code: tRNA dimethylallyltransferase (344 aa).

Residue 19 to 26 coordinates ATP; it reads GPTASGKT. 21 to 26 is a binding site for substrate; it reads TASGKT.

Belongs to the IPP transferase family. In terms of assembly, monomer. The cofactor is Mg(2+).

It catalyses the reaction adenosine(37) in tRNA + dimethylallyl diphosphate = N(6)-dimethylallyladenosine(37) in tRNA + diphosphate. Catalyzes the transfer of a dimethylallyl group onto the adenine at position 37 in tRNAs that read codons beginning with uridine, leading to the formation of N6-(dimethylallyl)adenosine (i(6)A). This Bifidobacterium animalis subsp. lactis (strain AD011) protein is tRNA dimethylallyltransferase.